We begin with the raw amino-acid sequence, 261 residues long: Short-chain dehydrogenase/reductase AFUA_1G00990 (261 aa).

The NADP(+) site is built by Leu19, Asp67, Asn94, Tyr169, Lys173, and Thr213. Tyr169 (proton donor) is an active-site residue. Lys173 acts as the Lowers pKa of active site Tyr in catalysis.

It belongs to the short-chain dehydrogenases/reductases (SDR) family.

Short-chain dehydrogenase/reductase; part of the gene cluster that mediates the biosynthesis of fumigermin that inhibits germination of spores of the inducing S.rapamycinicus, and thus helps the fungus to defend resources in the shared habitat against a bacterial competitor. The partially reducing polyketide synthase fngA alone is sufficient for the production of fumigermin. FgnA catalyzes the condensation of 3 malonyl-CoA units to an acetyl-CoA starter, and 3 methylations to yield fumigermin. It is remarkable that the five cluster genes including fgnA are conserved in distantly related fungi, supporting the assumption of a fumigermin cluster; it is thus possible that originally all five genes were functional, but that the genes encoding tailoring enzymes became inactive from mutations, similar to the case of the fgnA gene in strains A1163 and Af293. In Aspergillus fumigatus (strain ATCC MYA-4609 / CBS 101355 / FGSC A1100 / Af293) (Neosartorya fumigata), this protein is Short-chain dehydrogenase/reductase AFUA_1G00990.